A 370-amino-acid polypeptide reads, in one-letter code: DNA replication and repair protein RecF (370 aa).

30–37 (GENAQGKT) provides a ligand contact to ATP.

Belongs to the RecF family.

Its subcellular location is the cytoplasm. The RecF protein is involved in DNA metabolism; it is required for DNA replication and normal SOS inducibility. RecF binds preferentially to single-stranded, linear DNA. It also seems to bind ATP. This chain is DNA replication and repair protein RecF, found in Listeria monocytogenes serotype 4b (strain CLIP80459).